The following is a 903-amino-acid chain: E3 ubiquitin-protein ligase DDB_G0292642 (903 aa).

Disordered stretches follow at residues 115 to 137, 167 to 236, 284 to 366, 415 to 487, and 549 to 576; these read FTLPPTTNNNNNNTTNVLESSSD, LLKR…VIGS, VNKT…NNLK, TPSL…TTEI, and DDSEEEEEEEEEEEGEESDSESSSGSEG. Low complexity-rich tracts occupy residues 120 to 130 and 178 to 216; these read TTNNNNNNTTN and TTTTTTTTTTANNNNTRRNRNNNNNNNNNANGANRTIDT. The span at 217–232 shows a compositional bias: acidic residues; the sequence is SSEDDDESISSSDDDI. Composition is skewed to low complexity over residues 287 to 301 and 311 to 323; these read TSTTSTTTTTTTTTT and NRNNNNNNNNNNN. Positions 313–352 form a coiled coil; that stretch reads NNNNNNNNNNNKRFEIESEEESETDISSEEEENNNNNNNN. A compositionally biased stretch (acidic residues) spans 329-345; it reads ESEEESETDISSEEEEN. Low complexity predominate over residues 346–364; sequence NNNNNNNSNNNNNSNNNNN. Positions 415-427 are enriched in polar residues; the sequence is TPSLRLSSAHLPN. Positions 428–443 are enriched in low complexity; that stretch reads TTTTTTTTTTTTTTTT. Acidic residues-rich tracts occupy residues 451-466 and 549-568; these read NDDDESSDSDSSDSEI and DDSEEEEEEEEEEEGEESDS. Positions 542 to 569 form a coiled coil; that stretch reads AELVFEYDDSEEEEEEEEEEEGEESDSE. The interval 612–832 is TRIAD supradomain; that stretch reads EPVECKICYM…NEYPECFDRQ (221 aa). Zn(2+)-binding residues include Cys616, Cys619, Cys634, His636, Cys639, Cys642, Cys661, Cys666, Cys704, Cys709, Cys725, Cys728, Cys733, Cys736, His741, Cys746, Cys782, and Cys785. The segment at 616-666 adopts an RING-type 1 zinc-finger fold; the sequence is CKICYMEYDQSNEVFTLECDHVYCFDCITEHLRILITEGRVLDISCPHPQC. The IBR-type zinc finger occupies 683–746; the sequence is NWLKYQKFSM…GEYSHEGAKC (64 aa). The RING-type 2; atypical zinc finger occupies 782–811; that stretch reads CPTCKSHIEKHDGCNHMTCINCQHQFCWLC. Cys795 is a catalytic residue. Residues Cys800, Cys803, Cys808, Cys811, His819, and Cys828 each contribute to the Zn(2+) site. A helical transmembrane segment spans residues 864–884; sequence TAAFTVGAPLLLIGGAVLLCV.

The protein belongs to the RBR family. RNF14 subfamily.

The protein localises to the membrane. The enzyme catalyses [E2 ubiquitin-conjugating enzyme]-S-ubiquitinyl-L-cysteine + [acceptor protein]-L-lysine = [E2 ubiquitin-conjugating enzyme]-L-cysteine + [acceptor protein]-N(6)-ubiquitinyl-L-lysine.. It participates in protein modification; protein ubiquitination. Functionally, E3 ubiquitin-protein ligase. This Dictyostelium discoideum (Social amoeba) protein is E3 ubiquitin-protein ligase DDB_G0292642.